The chain runs to 550 residues: uncharacterized protein (550 aa).

The signal sequence occupies residues 1 to 53; the sequence is MVVIANKGALWAYYCKRLLNSVTYMMYPLIRKRTMKKLLLIVGLLLACSTVMR. Residues Asn-296 and Asn-518 are each glycosylated (N-linked (GlcNAc...) asparagine).

It is found in the endoplasmic reticulum. This is an uncharacterized protein from Schizosaccharomyces pombe (strain 972 / ATCC 24843) (Fission yeast).